Reading from the N-terminus, the 302-residue chain is Acetaldehyde dehydrogenase (302 aa).

12–15 lines the NAD(+) pocket; it reads SGNI. The Acyl-thioester intermediate role is filled by cysteine 127. NAD(+) is bound by residues 158–166 and asparagine 276; that span reads SAGPGTRQN.

The protein belongs to the acetaldehyde dehydrogenase family.

It catalyses the reaction acetaldehyde + NAD(+) + CoA = acetyl-CoA + NADH + H(+). The polypeptide is Acetaldehyde dehydrogenase (nahO) (Geobacillus genomosp. 3).